The primary structure comprises 637 residues: MSQNKACDLCRLKKIKCSRGQPRCQTCTLFQADCHYSNRARRKRLVQRSKETFGGITLPVFDYAAGINGNEPEPSDHSIPNQENFALTTNGTISKNIEKPEDGEESVQRRLKLLEEKIDLLLDIATETSEFKRENKAIELPSLVTQIKDAESIVIKHRQGSPVDNTPTRILNVESLFPPQLPDWEKAFHDIPKKEVAHELVTSYFQHVNWWWPTFVYNDFMYEFERLYAFGFHSNNAWLISFYSILALSSIRKRLGNSKTLAESLFSTAWVFVQKSDFFLTPSIDKVQALIVMTQYAAYLSSSSLCRTLCGQACLMAQQLNLHRKQSTDVEPEKAESWKRIFWMCYILDKNISLIFGTPSVFNDKDIDCNLPDSKYELLFGVQSGGDLIFVPTVSLTIIQSEIRNRLYSVKSPTQMAAREKIIIPIHQKLKAWEENLPSEIKMYHEMLLNNTFSPTISLSDRFEFLTFAGMEVYFSYLNTLIILHRPSSSTENRRICINAAREAVQLLKNRLNIDLRVNVKADPLWIFLYCPFTPFLIIFNNLVHETDTETDSETLLNDLDLLHVIYDFFMEMEPVSDVALELVKIADKLLRVAKEVCSAKNNDVTDSTFKDIVEGFELNDLNSWDFDRVTNVMRNL.

The segment at residues 7–34 is a DNA-binding region (zn(2)-C6 fungal-type); sequence CDLCRLKKIKCSRGQPRCQTCTLFQADC. The C2H2-type; degenerate zinc finger occupies 304-327; it reads SLCRTLCGQACLMAQQLNLHRKQS.

Its subcellular location is the nucleus. This is an uncharacterized protein from Schizosaccharomyces pombe (strain 972 / ATCC 24843) (Fission yeast).